A 57-amino-acid chain; its full sequence is Large ribosomal subunit protein bL32 (57 aa).

Basic residues predominate over residues 1-19 (MATPKRRMSRANTRSRRSQ). The segment at 1 to 21 (MATPKRRMSRANTRSRRSQWK) is disordered.

The protein belongs to the bacterial ribosomal protein bL32 family.

The chain is Large ribosomal subunit protein bL32 from Mycobacterium ulcerans (strain Agy99).